The chain runs to 1905 residues: Bromodomain adjacent to zinc finger domain protein 2A (1905 aa).

Disordered regions lie at residues 1–59 (MEME…NGLS) and 362–434 (TSIF…PTTS). 3 stretches are compositionally biased toward polar residues: residues 35 to 59 (TNGS…NGLS), 379 to 391 (LQDN…NGSD), and 399 to 420 (TQSS…STIQ). Residue T507 is modified to Phosphothreonine. A Phosphoserine modification is found at S509. The MBD domain occupies 546-617 (IATPEEVRLP…EHFSFSPRMP (72 aa)). T548 bears the Phosphothreonine mark. S613 carries the phosphoserine modification. A disordered region spans residues 648 to 792 (ITGKRGRPRN…KEKEEVTKAK (145 aa)). DNA-binding regions (a.T hook) lie at residues 649–661 (TGKR…TEKA) and 670–682 (KRGR…VKIT). Positions 656–668 (RNTEKAKTKEVPK) are enriched in basic and acidic residues. Residues 669–678 (VKRGRGRPPK) are compositionally biased toward basic residues. Residue K680 is modified to N6-acetyllysine; by KAT8. Positions 686–709 (NKTDNRPLKKLEAQETLNEEDKAK) are enriched in basic and acidic residues. Residues 693 to 792 (LKKLEAQETL…KEKEEVTKAK (100 aa)) adopt a coiled-coil conformation. The span at 710 to 721 (IAKSKKKMRQKV) shows a compositional bias: basic residues. The segment covering 725–734 (ECQTTIQGQA) has biased composition (polar residues). 2 stretches are compositionally biased toward basic and acidic residues: residues 739 to 748 (KQETKSLKQK) and 756 to 792 (AEKE…TKAK). K799 carries the N6-acetyllysine modification. The 66-residue stretch at 848 to 913 (SGAFSDCLTI…LKAALHDPGF (66 aa)) folds into the DDT domain. K866 is covalently cross-linked (Glycyl lysine isopeptide (Lys-Gly) (interchain with G-Cter in SUMO2)). S1051 bears the Phosphoserine mark. Residues K1150 and K1172 each participate in a glycyl lysine isopeptide (Lys-Gly) (interchain with G-Cter in SUMO2) cross-link. Disordered regions lie at residues 1178–1220 (SNTT…PQAQ), 1283–1318 (LSSS…SSPD), and 1330–1412 (MPCN…RPPS). The residue at position 1184 (S1184) is a Phosphoserine. The segment at residues 1186-1198 (ARARGRPRKTKPG) is a DNA-binding region (a.T hook 3). The span at 1283–1293 (LSSSVLTPDSS) shows a compositional bias: low complexity. The segment covering 1306–1315 (EEPEPDEAES) has biased composition (acidic residues). Residues 1345–1359 (DQPTPSPQQLASSKP) are compositionally biased toward polar residues. Phosphoserine is present on S1397. A DNA-binding region (a.T hook 4) is located at residues 1404 to 1416 (PKRRGRPPSKFFK). S1559 is subject to Phosphoserine. Glycyl lysine isopeptide (Lys-Gly) (interchain with G-Cter in SUMO2) cross-links involve residues K1676 and K1709. Residues 1676 to 1726 (KVTCLVCRKGDNDEFLLLCDGCDRGCHIYCHRPKMEAVPEGDWFCTVCLAQ) form a PHD-type zinc finger. Disordered regions lie at residues 1734-1755 (QKPG…NFSE) and 1769-1789 (ESPA…KRRR). 4 positions are modified to phosphoserine: S1747, S1770, S1783, and S1785. The region spanning 1793–1897 (RNHHSDLTFC…RFFESRWEEF (105 aa)) is the Bromo domain.

The protein belongs to the WAL family. In terms of assembly, component of the NoRC-1 ISWI chromatin remodeling complex at least composed of SMARCA1 and BAZ2A/TIP5, which regulates the spacing of histone octamers on the DNA template to facilitate access to DNA. Within the NoRC-1 ISWI chromatin remodeling complex interacts with SMARCA1; the interaction is direct. Component of the NoRC-5 ISWI chromatin remodeling complex (also called the NoRC nucleolar-remodeling complex), at least composed of SMARCA5/SNF2H and BAZ2A/TIP5, which regulates the spacing of histone octamers on the DNA template to facilitate access to DNA. Within the NoRC-5 ISWI chromatin remodeling complexes interacts with SMARCA5/SNF2H; the interaction is direct. Interacts with TTF1; the interaction is required for recruitment of the NoRC-5 ISWI chromatin remodeling complex to rDNA. Interacts with HDAC1. Interacts with SIN3A. Interacts with DNMT1 and DNM3B. Interacts with BEND3 and USP21. Post-translationally, acetylation at Lys-680 by KAT8/MOF promotes its dissociation from pRNA, affecting heterochromatin formation, nucleosome positioning and rDNA silencing. Deacetylation by SIRT1 in late S phase enhances pRNA-binding, allowing de novo DNA methylation and heterochromatin formation. Acetylation is high during S phase and declines to background levels in late S phase when the silent copies of rRNA genes are replicated. Ubiquitinated. Deubiquitinated by USP21 leading to its stabilization. In terms of tissue distribution, expressed at moderate levels in most tissues analyzed, including heart, brain, placenta, lung, skeletal muscle, kidney and pancreas.

Its subcellular location is the nucleus. It is found in the nucleolus. Regulatory subunit of the ATP-dependent NoRC-1 and NoRC-5 ISWI chromatin remodeling complexes, which form ordered nucleosome arrays on chromatin and facilitate access to DNA during DNA-templated processes such as DNA replication, transcription, and repair. Both complexes regulate the spacing of nucleosomes along the chromatin and have the ability to slide mononucleosomes to the center of a DNA template. Directly stimulates the ATPase activity of SMARCA5 in the NoRC-5 ISWI chromatin remodeling complex. The NoRC-1 ISWI chromatin remodeling complex has a lower ATP hydrolysis rate than the NoRC-5 ISWI chromatin remodeling complex. Within the NoRC-5 ISWI chromatin remodeling complex, mediates silencing of a fraction of rDNA by recruiting histone-modifying enzymes and DNA methyltransferases, leading to heterochromatin formation and transcriptional silencing. In the complex, it plays a central role by being recruited to rDNA and by targeting chromatin modifying enzymes such as HDAC1, leading to repress RNA polymerase I transcription. Recruited to rDNA via its interaction with TTF1 and its ability to recognize and bind histone H4 acetylated on 'Lys-16' (H4K16ac), leading to deacetylation of H4K5ac, H4K8ac, H4K12ac but not H4K16ac. Specifically binds pRNAs, 150-250 nucleotide RNAs that are complementary in sequence to the rDNA promoter; pRNA-binding is required for heterochromatin formation and rDNA silencing. This Homo sapiens (Human) protein is Bromodomain adjacent to zinc finger domain protein 2A (BAZ2A).